We begin with the raw amino-acid sequence, 389 residues long: Probable tRNA pseudouridine synthase D 1 (389 aa).

Catalysis depends on Asp-63, which acts as the Nucleophile. Positions 135 to 345 constitute a TRUD domain; that stretch reads GAPNYYDDQR…KYTKRPIISI (211 aa).

Belongs to the pseudouridine synthase TruD family.

The enzyme catalyses uridine(13) in tRNA = pseudouridine(13) in tRNA. Functionally, could be responsible for synthesis of pseudouridine from uracil-13 in transfer RNAs. This Methanococcus maripaludis (strain DSM 14266 / JCM 13030 / NBRC 101832 / S2 / LL) protein is Probable tRNA pseudouridine synthase D 1 (truD1).